Consider the following 62-residue polypeptide: Large ribosomal subunit protein uL29 (62 aa).

The protein belongs to the universal ribosomal protein uL29 family.

This chain is Large ribosomal subunit protein uL29, found in Amoebophilus asiaticus (strain 5a2).